We begin with the raw amino-acid sequence, 684 residues long: Glycine--tRNA ligase beta subunit (684 aa).

It belongs to the class-II aminoacyl-tRNA synthetase family. In terms of assembly, tetramer of two alpha and two beta subunits.

The protein resides in the cytoplasm. It carries out the reaction tRNA(Gly) + glycine + ATP = glycyl-tRNA(Gly) + AMP + diphosphate. The chain is Glycine--tRNA ligase beta subunit from Pseudomonas fluorescens (strain ATCC BAA-477 / NRRL B-23932 / Pf-5).